A 344-amino-acid polypeptide reads, in one-letter code: Heat-inducible transcription repressor HrcA (344 aa).

This sequence belongs to the HrcA family.

Functionally, negative regulator of class I heat shock genes (grpE-dnaK-dnaJ and groELS operons). Prevents heat-shock induction of these operons. The polypeptide is Heat-inducible transcription repressor HrcA (Streptococcus pyogenes serotype M6 (strain ATCC BAA-946 / MGAS10394)).